A 274-amino-acid chain; its full sequence is Large ribosomal subunit protein uL2 (274 aa).

A disordered region spans residues 224–274 (VAMNPVDHPHGGGEGRTSGGRHPVTPWGIPTKGYKTRRNKRSNKLIVQKRK). Basic residues predominate over residues 257–274 (YKTRRNKRSNKLIVQKRK).

The protein belongs to the universal ribosomal protein uL2 family. Part of the 50S ribosomal subunit. Forms a bridge to the 30S subunit in the 70S ribosome.

Its function is as follows. One of the primary rRNA binding proteins. Required for association of the 30S and 50S subunits to form the 70S ribosome, for tRNA binding and peptide bond formation. It has been suggested to have peptidyltransferase activity; this is somewhat controversial. Makes several contacts with the 16S rRNA in the 70S ribosome. The chain is Large ribosomal subunit protein uL2 from Francisella tularensis subsp. holarctica (strain FTNF002-00 / FTA).